A 374-amino-acid chain; its full sequence is Phosphate acyltransferase (374 aa).

The protein belongs to the PlsX family. Homodimer. Probably interacts with PlsY.

The protein localises to the cytoplasm. It catalyses the reaction a fatty acyl-[ACP] + phosphate = an acyl phosphate + holo-[ACP]. It participates in lipid metabolism; phospholipid metabolism. In terms of biological role, catalyzes the reversible formation of acyl-phosphate (acyl-PO(4)) from acyl-[acyl-carrier-protein] (acyl-ACP). This enzyme utilizes acyl-ACP as fatty acyl donor, but not acyl-CoA. This is Phosphate acyltransferase from Gluconacetobacter diazotrophicus (strain ATCC 49037 / DSM 5601 / CCUG 37298 / CIP 103539 / LMG 7603 / PAl5).